A 1177-amino-acid polypeptide reads, in one-letter code: Dynein axonemal assembly factor 9 (1177 aa).

Positions 1–27 (MDVYPPRRQGLPRARSPGGSSRGSPSV) are disordered. A compositionally biased stretch (low complexity) spans 11 to 27 (LPRARSPGGSSRGSPSV).

In terms of assembly, interacts with ARL3.

Its function is as follows. May act as an effector for ARL3. The protein is Dynein axonemal assembly factor 9 of Homo sapiens (Human).